The primary structure comprises 1230 residues: Potassium channel subfamily T member 1 (1230 aa).

Residues 1–37 (MARAKLPRSPSEGKAGPGGAPAGAAAPEEPHGLSPLL) are disordered. Residues 1-93 (MARAKLPRSP…LFFIKNQRSS (93 aa)) are Cytoplasmic-facing. Residues 94–126 (LRIRLFNFSLKLLTCLLYIVRVLLDDPALGIGC) form a helical membrane-spanning segment. Residues 127–153 (WGCPKQNYSFNDSSSEINWAPILWVER) are Extracellular-facing. 2 N-linked (GlcNAc...) asparagine glycosylation sites follow: N133 and N137. Residues 154–178 (KMTLWAIQVIVAIISFLETMLLIYL) traverse the membrane as a helical segment. Topologically, residues 179 to 192 (SYKGNIWEQIFRVS) are cytoplasmic. The helical transmembrane segment at 193–208 (FVLEMINTLPFIITIF) threads the bilayer. Over 209 to 215 (WPPLRNL) the chain is Extracellular. Residues 216–233 (FIPVFLNCWLAKHALENM) traverse the membrane as a helical segment. The Cytoplasmic portion of the chain corresponds to 234–246 (INDFHRAILRTQS). Residues 247–274 (AMFNQVLILFCTLLCLVFTGTCGIQHLE) traverse the membrane as a helical segment. Residues 275-281 (RAGENLS) lie on the Extracellular side of the membrane. The segment at residues 282 to 302 (LLTSFYFCIVTFSTVGYGDVT) is an intramembrane region (pore-forming). K(+) contacts are provided by V296 and G297. At 303 to 304 (PK) the chain is on the extracellular side. A helical membrane pass occupies residues 305 to 338 (IWPSQLLVVIMICVALVVLPLQFEELVYLWMERQ). Over 339–1230 (KSGGNYSRHR…NPETRDETQL (892 aa)) the chain is Cytoplasmic. The region spanning 352-488 (EKHVVLCVSS…FHVKFADHVV (137 aa)) is the RCK N-terminal 1 domain. Residues L513, H516, S538, and N540 each contribute to the Na(+) site. Residues 660-689 (TEHRPTQSGGGGGGSKLALPTENGSGSRRP) are disordered. 2 residues coordinate Zn(2+): C758 and C759. Positions 761 and 764 each coordinate K(+). Na(+) contacts are provided by R761 and K764. Residues C766 and H768 each coordinate Zn(2+). K(+) contacts are provided by N769, Y771, Y777, and G778. Residue Y771 coordinates Na(+). F779 serves as a coordination point for Na(+). An RCK N-terminal 2 domain is found at 781-921 (NKLIIVSAET…QFRAKDSYSL (141 aa)). K(+) is bound by residues S787, L818, D820, G842, and D865. Disordered stretches follow at residues 1048 to 1078 (EVKGPWGSRAGTGGSSQGRHTGGGDPAEHPL) and 1204 to 1230 (SSSQSRKSSCSHKLSSCNPETRDETQL). Over residues 1057–1072 (AGTGGSSQGRHTGGGD) the composition is skewed to gly residues. Positions 1204-1219 (SSSQSRKSSCSHKLSS) are enriched in low complexity.

This sequence belongs to the potassium channel family. Calcium-activated (TC 1.A.1.3) subfamily. KCa4.1/KCNT1 sub-subfamily. Homotetramer; which constitutes the Na(+)-activated K(+) channel. Interacts with KCNT2; these heterodimer channels differ from the homomers in their unitary conductance, kinetic behavior, subcellular localization, and response to activation of protein kinase C. Interacts (via C-terminus) with FMR1; this interaction alters gating properties of KCNT1. Interacts with CRBN via its cytoplasmic C-terminus. Post-translationally, phosphorylated by protein kinase C. Phosphorylation of the C-terminal domain increases channel activity. In terms of tissue distribution, highest expression in liver, brain and spinal cord. Lowest expression in skeletal muscle.

It localises to the cell membrane. It carries out the reaction K(+)(in) = K(+)(out). Its activity is regulated as follows. Activated by high intracellular Na(+). In addition to activation by Na(+), is cooperatively activated by intracellular Cl(-) levels. Inhibited by Zn(2+). Activated upon stimulation of G-protein coupled receptors, such as CHRM1 and GRIA1. Its function is as follows. Sodium-activated K(+) channel. Acts as an important mediator of neuronal membrane excitability. Contributes to the delayed outward currents. Regulates neuronal bursting in sensory neurons. Contributes to synaptic development and plasticity. The protein is Potassium channel subfamily T member 1 of Homo sapiens (Human).